Here is a 707-residue protein sequence, read N- to C-terminus: UvrABC system protein C (707 aa).

In terms of domain architecture, GIY-YIG spans 14-94 (AEPGCYLMKD…IKKHRPRFNV (81 aa)). In terms of domain architecture, UVR spans 206–241 (GELVERLRGRMAGAAEGLRFEEAARLRDQLQAVERS). The tract at residues 654 to 684 (PDAPPAAADEPSGAPEGTPAGGPAEAIPDAA) is disordered. Residues 658–684 (PAAADEPSGAPEGTPAGGPAEAIPDAA) show a composition bias toward low complexity.

This sequence belongs to the UvrC family. As to quaternary structure, interacts with UvrB in an incision complex.

The protein resides in the cytoplasm. Functionally, the UvrABC repair system catalyzes the recognition and processing of DNA lesions. UvrC both incises the 5' and 3' sides of the lesion. The N-terminal half is responsible for the 3' incision and the C-terminal half is responsible for the 5' incision. This chain is UvrABC system protein C, found in Anaeromyxobacter dehalogenans (strain 2CP-C).